The primary structure comprises 577 residues: Arginine--tRNA ligase (577 aa).

Residues Pro-122–His-132 carry the 'HIGH' region motif.

The protein belongs to the class-I aminoacyl-tRNA synthetase family. As to quaternary structure, monomer.

The protein localises to the cytoplasm. It carries out the reaction tRNA(Arg) + L-arginine + ATP = L-arginyl-tRNA(Arg) + AMP + diphosphate. This chain is Arginine--tRNA ligase, found in Klebsiella pneumoniae (strain 342).